The chain runs to 290 residues: Bifunctional protein FolD 1 (290 aa).

NADP(+) contacts are provided by residues 164–166 (GRS), isoleucine 193, and isoleucine 236.

This sequence belongs to the tetrahydrofolate dehydrogenase/cyclohydrolase family. As to quaternary structure, homodimer.

It catalyses the reaction (6R)-5,10-methylene-5,6,7,8-tetrahydrofolate + NADP(+) = (6R)-5,10-methenyltetrahydrofolate + NADPH. The enzyme catalyses (6R)-5,10-methenyltetrahydrofolate + H2O = (6R)-10-formyltetrahydrofolate + H(+). Its pathway is one-carbon metabolism; tetrahydrofolate interconversion. Catalyzes the oxidation of 5,10-methylenetetrahydrofolate to 5,10-methenyltetrahydrofolate and then the hydrolysis of 5,10-methenyltetrahydrofolate to 10-formyltetrahydrofolate. The sequence is that of Bifunctional protein FolD 1 from Geobacter metallireducens (strain ATCC 53774 / DSM 7210 / GS-15).